The chain runs to 748 residues: Cysteine--tRNA ligase, cytoplasmic (748 aa).

The tract at residues 1–25 is disordered; sequence MAGSSGQQGKGRRVQPQWSPPAGTQ. At A2 the chain carries N-acetylalanine. Residue S19 is modified to Phosphoserine. Residue C55 participates in Zn(2+) binding. G56 lines the L-cysteine pocket. The 'HIGH' region signature appears at 57–67; that stretch reads PTVYDASHMGH. T96 is an L-cysteine binding site. Residues 101–104 carry the 'KIIK' region motif; it reads KIIK. Residues S305 and S307 each carry the phosphoserine modification. Residues C348, H373, and E377 each coordinate Zn(2+). Residue H373 participates in L-cysteine binding. Positions 406-410 match the 'KMSKS' region motif; the sequence is KMSKS. ATP is bound at residue K409. Basic and acidic residues-rich tracts occupy residues 654-679 and 700-717; these read KRQV…EAAK and KFDE…KELS. 2 disordered regions span residues 654 to 686 and 700 to 721; these read KRQV…MKIP and KFDE…KGQA. Position 746 is a phosphoserine (S746).

As to quaternary structure, homodimer. Requires Zn(2+) as cofactor.

The protein resides in the cytoplasm. The catalysed reaction is tRNA(Cys) + L-cysteine + ATP = L-cysteinyl-tRNA(Cys) + AMP + diphosphate. Catalyzes the ATP-dependent ligation of cysteine to tRNA(Cys). The protein is Cysteine--tRNA ligase, cytoplasmic (CARS1) of Macaca fascicularis (Crab-eating macaque).